A 307-amino-acid polypeptide reads, in one-letter code: tRNA dimethylallyltransferase (307 aa).

7 to 14 lines the ATP pocket; it reads GPTAGGKT. 9–14 is a substrate binding site; sequence TAGGKT. The interval 32–35 is interaction with substrate tRNA; the sequence is DSRQ.

It belongs to the IPP transferase family. In terms of assembly, monomer. Requires Mg(2+) as cofactor.

It catalyses the reaction adenosine(37) in tRNA + dimethylallyl diphosphate = N(6)-dimethylallyladenosine(37) in tRNA + diphosphate. Functionally, catalyzes the transfer of a dimethylallyl group onto the adenine at position 37 in tRNAs that read codons beginning with uridine, leading to the formation of N6-(dimethylallyl)adenosine (i(6)A). The protein is tRNA dimethylallyltransferase of Elusimicrobium minutum (strain Pei191).